The sequence spans 436 residues: Histone acetyltransferase type B subunit 2 (436 aa).

WD repeat units lie at residues 136–176 (DHKG…SLPT), 187–227 (GHTK…KGNK), 237–277 (HHSS…TTRA), 284–324 (QHRD…TKLH), and 328–368 (SHTD…EEQT). The segment at 370-374 (EDAQD) is interaction with the histone H4 N-terminus. The stretch at 385–425 (GHTNRISDFSWNLNDPWVLCSAAEDNLLQVWKVADAIVGKD) is one WD 6 repeat.

It belongs to the WD repeat RBAP46/RBAP48/MSI1 family. As to quaternary structure, component of the HAT-B complex composed of at least hat1 and hat2. The HAT-B complex binds to histone H4 tail.

The protein resides in the cytoplasm. It is found in the nucleus. Regulatory subunit of the histone acetylase B (HAT-B) complex. The complex acetylates 'Lys-12' of histone H4 which is required for telomeric silencing. This chain is Histone acetyltransferase type B subunit 2 (hat2), found in Aspergillus fumigatus (strain ATCC MYA-4609 / CBS 101355 / FGSC A1100 / Af293) (Neosartorya fumigata).